The chain runs to 330 residues: Ferredoxin--NADP reductase (330 aa).

Glutamate 35, glutamine 43, tyrosine 48, valine 90, phenylalanine 123, aspartate 285, and threonine 326 together coordinate FAD.

The protein belongs to the ferredoxin--NADP reductase type 2 family. In terms of assembly, homodimer. It depends on FAD as a cofactor.

The catalysed reaction is 2 reduced [2Fe-2S]-[ferredoxin] + NADP(+) + H(+) = 2 oxidized [2Fe-2S]-[ferredoxin] + NADPH. The polypeptide is Ferredoxin--NADP reductase (Streptococcus pyogenes serotype M3 (strain ATCC BAA-595 / MGAS315)).